We begin with the raw amino-acid sequence, 344 residues long: Ketol-acid reductoisomerase (NADP(+)) (344 aa).

The KARI N-terminal Rossmann domain maps to 1–181 (MATMYYEQNI…GAARGGLLET (181 aa)). Residues 25-28 (YGSQ), Arg48, Ser52, and 82-85 (DERQ) each bind NADP(+). Residue His107 is part of the active site. Residue Gly133 participates in NADP(+) binding. A KARI C-terminal knotted domain is found at 182 to 327 (TFKEETETDL…AKLREMMPFI (146 aa)). Mg(2+)-binding residues include Asp190, Glu194, Glu226, and Glu230. Residue Ser251 coordinates substrate.

It belongs to the ketol-acid reductoisomerase family. Mg(2+) is required as a cofactor.

The enzyme catalyses (2R)-2,3-dihydroxy-3-methylbutanoate + NADP(+) = (2S)-2-acetolactate + NADPH + H(+). The catalysed reaction is (2R,3R)-2,3-dihydroxy-3-methylpentanoate + NADP(+) = (S)-2-ethyl-2-hydroxy-3-oxobutanoate + NADPH + H(+). It participates in amino-acid biosynthesis; L-isoleucine biosynthesis; L-isoleucine from 2-oxobutanoate: step 2/4. It functions in the pathway amino-acid biosynthesis; L-valine biosynthesis; L-valine from pyruvate: step 2/4. Functionally, involved in the biosynthesis of branched-chain amino acids (BCAA). Catalyzes an alkyl-migration followed by a ketol-acid reduction of (S)-2-acetolactate (S2AL) to yield (R)-2,3-dihydroxy-isovalerate. In the isomerase reaction, S2AL is rearranged via a Mg-dependent methyl migration to produce 3-hydroxy-3-methyl-2-ketobutyrate (HMKB). In the reductase reaction, this 2-ketoacid undergoes a metal-dependent reduction by NADPH to yield (R)-2,3-dihydroxy-isovalerate. The chain is Ketol-acid reductoisomerase (NADP(+)) from Lysinibacillus sphaericus (strain C3-41).